A 315-amino-acid polypeptide reads, in one-letter code: C1GALT1-specific chaperone 1-like protein (315 aa).

Residues 1–8 (MVSASGTS) are Cytoplasmic-facing. Residues 9-29 (FFKGMLLGSISWVLITMFGQI) form a helical; Signal-anchor for type II membrane protein membrane-spanning segment. At 30 to 315 (HIRHRGQTQD…FLPPVGSEND (286 aa)) the chain is on the lumenal side. Residues Asn55 and Asn301 are each glycosylated (N-linked (GlcNAc...) asparagine).

It belongs to the glycosyltransferase 31 family. Beta3-Gal-T subfamily.

The protein resides in the membrane. The chain is C1GALT1-specific chaperone 1-like protein from Homo sapiens (Human).